The primary structure comprises 490 residues: MTTLPVQQLYIHGQRVDATSGKTFKTVNPATGEVIAEVQVASQADVERAVQSASEGQKVWAAMTAMERSRILRRAVEILRERNDELAHLETLDTGKALAETTTVDIVTGADVVEYYAGLATAIEGIQLPLRESSFFYTRREPLGVVAGIGAWNYPIQIAMWKSAPALAAGNAMVFKPSEVTPLTAIRLAEIYTEAGVPAGVFNVVQGPGREIGQWLTEHPVIEKISFTGGVATGKKVMASAASSSLKEVTMELGGKSPLVICDDADLDRAADIAVMANFFSSGQVCTNGTRVFVPRSMLAAFEAAVVERVKRIRIGDPMAAETNFGPLTSFPHMENVLRYIESGKAEGARLLTGGGRATEGALANGAYVLPTVFSDCRDDMTIVKEEIFGPVMSILAYDDEDEVVRRANDTTFGLAAGVVSKDISRAHRIIHRLEAGICWINTWGESPAEMPVGGYKESGVGRENGISTLGHYTRIKSVQVELGDYASVF.

K(+)-binding residues include Thr26 and Asp93. 150-152 (GAW) contributes to the NAD(+) binding site. Lys162 (charge relay system) is an active-site residue. Residue 176-179 (KPSE) participates in NAD(+) binding. Residue Val180 participates in K(+) binding. 230–233 (GVAT) contacts NAD(+). Residue Leu246 coordinates K(+). Glu252 acts as the Proton acceptor in catalysis. Positions 254, 286, and 387 each coordinate NAD(+). The active-site Nucleophile is Cys286. Cys286 carries the post-translational modification Cysteine sulfenic acid (-SOH). K(+) is bound by residues Lys457 and Gly460. Glu464 serves as the catalytic Charge relay system.

Belongs to the aldehyde dehydrogenase family. In terms of assembly, dimer of dimers. Requires K(+) as cofactor.

It carries out the reaction betaine aldehyde + NAD(+) + H2O = glycine betaine + NADH + 2 H(+). The protein operates within amine and polyamine biosynthesis; betaine biosynthesis via choline pathway; betaine from betaine aldehyde: step 1/1. Functionally, involved in the biosynthesis of the osmoprotectant glycine betaine. Catalyzes the irreversible oxidation of betaine aldehyde to the corresponding acid. In Stenotrophomonas maltophilia (strain K279a), this protein is Betaine aldehyde dehydrogenase.